Reading from the N-terminus, the 635-residue chain is Biosynthetic arginine decarboxylase (635 aa).

N6-(pyridoxal phosphate)lysine is present on Lys100. 282 to 292 is a substrate binding site; the sequence is LDIGGGLGVDY.

Belongs to the Orn/Lys/Arg decarboxylase class-II family. SpeA subfamily. Mg(2+) is required as a cofactor. Pyridoxal 5'-phosphate serves as cofactor.

It carries out the reaction L-arginine + H(+) = agmatine + CO2. Its pathway is amine and polyamine biosynthesis; agmatine biosynthesis; agmatine from L-arginine: step 1/1. Functionally, catalyzes the biosynthesis of agmatine from arginine. This is Biosynthetic arginine decarboxylase from Geotalea uraniireducens (strain Rf4) (Geobacter uraniireducens).